A 394-amino-acid chain; its full sequence is Acetate kinase (394 aa).

N10 contributes to the Mg(2+) binding site. K17 serves as a coordination point for ATP. Substrate is bound at residue R87. Residue D144 is the Proton donor/acceptor of the active site. ATP-binding positions include 204–208 (HLGNG), 279–281 (DMR), and 327–331 (GIGEN). Mg(2+) is bound at residue E381.

This sequence belongs to the acetokinase family. As to quaternary structure, homodimer. Mg(2+) serves as cofactor. It depends on Mn(2+) as a cofactor.

The protein localises to the cytoplasm. It carries out the reaction acetate + ATP = acetyl phosphate + ADP. The protein operates within metabolic intermediate biosynthesis; acetyl-CoA biosynthesis; acetyl-CoA from acetate: step 1/2. Functionally, catalyzes the formation of acetyl phosphate from acetate and ATP. Can also catalyze the reverse reaction. The sequence is that of Acetate kinase from Ectopseudomonas mendocina (strain ymp) (Pseudomonas mendocina).